Consider the following 503-residue polypeptide: ATP synthase subunit alpha (503 aa).

170–177 (GDRQTGKT) is an ATP binding site.

Belongs to the ATPase alpha/beta chains family. F-type ATPases have 2 components, CF(1) - the catalytic core - and CF(0) - the membrane proton channel. CF(1) has five subunits: alpha(3), beta(3), gamma(1), delta(1), epsilon(1). CF(0) has three main subunits: a(1), b(2) and c(9-12). The alpha and beta chains form an alternating ring which encloses part of the gamma chain. CF(1) is attached to CF(0) by a central stalk formed by the gamma and epsilon chains, while a peripheral stalk is formed by the delta and b chains.

It is found in the cell inner membrane. The enzyme catalyses ATP + H2O + 4 H(+)(in) = ADP + phosphate + 5 H(+)(out). Its function is as follows. Produces ATP from ADP in the presence of a proton gradient across the membrane. The alpha chain is a regulatory subunit. This Pseudothermotoga lettingae (strain ATCC BAA-301 / DSM 14385 / NBRC 107922 / TMO) (Thermotoga lettingae) protein is ATP synthase subunit alpha.